The sequence spans 363 residues: Dihydroorotate dehydrogenase (quinone) (363 aa).

Residues 62-66 and T86 each bind FMN; that span reads AGFDK. K66 contacts substrate. 111-115 contributes to the substrate binding site; sequence NRMGF. Residues N142 and N175 each coordinate FMN. N175 is a binding site for substrate. The Nucleophile role is filled by S178. N180 serves as a coordination point for substrate. FMN contacts are provided by K216 and T244. Residue 245 to 246 participates in substrate binding; sequence NT. Residues G267, G296, and 317-318 contribute to the FMN site; that span reads YT.

Belongs to the dihydroorotate dehydrogenase family. Type 2 subfamily. In terms of assembly, monomer. It depends on FMN as a cofactor.

It localises to the cell membrane. The catalysed reaction is (S)-dihydroorotate + a quinone = orotate + a quinol. It participates in pyrimidine metabolism; UMP biosynthesis via de novo pathway; orotate from (S)-dihydroorotate (quinone route): step 1/1. In terms of biological role, catalyzes the conversion of dihydroorotate to orotate with quinone as electron acceptor. The chain is Dihydroorotate dehydrogenase (quinone) from Anaeromyxobacter sp. (strain Fw109-5).